A 156-amino-acid polypeptide reads, in one-letter code: Transcription elongation factor GreA (156 aa).

The stretch at Met1 to Arg32 forms a coiled coil.

Belongs to the GreA/GreB family.

In terms of biological role, necessary for efficient RNA polymerase transcription elongation past template-encoded arresting sites. The arresting sites in DNA have the property of trapping a certain fraction of elongating RNA polymerases that pass through, resulting in locked ternary complexes. Cleavage of the nascent transcript by cleavage factors such as GreA or GreB allows the resumption of elongation from the new 3'terminus. GreA releases sequences of 2 to 3 nucleotides. This Thermotoga petrophila (strain ATCC BAA-488 / DSM 13995 / JCM 10881 / RKU-1) protein is Transcription elongation factor GreA.